A 159-amino-acid polypeptide reads, in one-letter code: MSLVTVGIGDLAVTGDPRAVIVTHGLGSCIALVAWDPGLRVGGMLHFQLPASALSPERALDAPGTFADTGIPLLFHRLYARGCRKEALVVKAAGGGSFNDRGGAFDIGRRNHAAMWRILRHARVAVVAEDVGGSRSRTVRLFLDSGRVTVQSGDQVAPL.

The protein belongs to the CheD family.

It catalyses the reaction L-glutaminyl-[protein] + H2O = L-glutamyl-[protein] + NH4(+). In terms of biological role, probably deamidates glutamine residues to glutamate on methyl-accepting chemotaxis receptors (MCPs), playing an important role in chemotaxis. In Anaeromyxobacter dehalogenans (strain 2CP-C), this protein is Probable chemoreceptor glutamine deamidase CheD 2.